The chain runs to 411 residues: Prophage integrase IntR (411 aa).

The Core-binding (CB) domain maps to 81–176; the sequence is KTFGELCDIW…LLCSLLRFAY (96 aa). A Tyr recombinase domain is found at 197 to 404; it reads IKPDPLSKTE…IDDMNDEQIA (208 aa). Catalysis depends on residues Arg231, Lys266, Arg358, and His381. Tyr391 acts as the O-(3'-phospho-DNA)-tyrosine intermediate in catalysis.

Belongs to the 'phage' integrase family.

Integrase is necessary for integration of the phage into the host genome by site-specific recombination. In conjunction with excisionase, integrase is also necessary for excision of the prophage from the host genome. This is Prophage integrase IntR (intR) from Escherichia coli (strain K12).